The sequence spans 254 residues: Claudin-16 (254 aa).

The Cytoplasmic portion of the chain corresponds to 1–22 (MGPGLAASHVSFPDSLLAKMRD). The helical transmembrane segment at 23 to 43 (LLQYVACFFAFFSAGFLVVAT) threads the bilayer. The Extracellular segment spans residues 44-98 (WTDCWMVNADDSLEVSTKCRGLWWECVTNAFDGIRTCDEYDSILAEHSLKLVVTR). The chain crosses the membrane as a helical span at residues 99–119 (ALMITADILAGFGFITLLLGL). The Cytoplasmic segment spans residues 120-134 (DCVKFLPDEPYIKVR). A helical transmembrane segment spans residues 135–155 (ISFVAGTTLLIAGAPGIIGSV). The Extracellular portion of the chain corresponds to 156 to 188 (WYAVDVYVERSSLVLHNIFLGIQYKFGWSCWLG). A helical transmembrane segment spans residues 189-209 (MAGSLGCFLAGAILTCCLYLF). Over 210 to 254 (KDVGPERSYPYSTRKAYSTTAVSMPRSHAIPRTQTAKMYAVDTRV) the chain is Cytoplasmic. Residues 252 to 254 (TRV) carry the Interaction with TJP1 motif.

This sequence belongs to the claudin family. Can form heteropolymeric tight junction strands with other claudins. Interacts with CLDN19. Interacts (via PDZ-binding motif TRV) with TJP1 (via PDZ domain). Cannot form tight junction strands on its own. Expressed preferentially in kidney.

It localises to the cell junction. Its subcellular location is the tight junction. The protein localises to the cell membrane. The enzyme catalyses Mg(2+)(in) = Mg(2+)(out). The catalysed reaction is Ca(2+)(in) = Ca(2+)(out). It catalyses the reaction Na(+)(in) = Na(+)(out). It carries out the reaction K(+)(in) = K(+)(out). The enzyme catalyses Rb(+)(in) = Rb(+)(out). The catalysed reaction is Cs(+)(in) = Cs(+)(out). It catalyses the reaction Li(+)(in) = Li(+)(out). Forms paracellular channels: coassembles with CLDN19 into tight junction strands with cation-selective channels through the strands, conveying epithelial permeability in a process known as paracellular tight junction permeability. Involved in the maintenance of ion gradients along the nephron. In the thick ascending limb (TAL) of Henle's loop, facilitates sodium paracellular permeability from the interstitial compartment to the lumen, contributing to the lumen-positive transepithelial potential that drives paracellular magnesium and calcium reabsorption. In Bos taurus (Bovine), this protein is Claudin-16 (CLDN16).